Here is a 313-residue protein sequence, read N- to C-terminus: Small ribosomal subunit protein uS2 (313 aa).

A disordered region spans residues 281–301 (AAPAAPAVEPAPEAAQEATAE).

Belongs to the universal ribosomal protein uS2 family.

This Caulobacter sp. (strain K31) protein is Small ribosomal subunit protein uS2.